The primary structure comprises 80 residues: Small ribosomal subunit protein uS17 (80 aa).

Belongs to the universal ribosomal protein uS17 family. As to quaternary structure, part of the 30S ribosomal subunit.

In terms of biological role, one of the primary rRNA binding proteins, it binds specifically to the 5'-end of 16S ribosomal RNA. This is Small ribosomal subunit protein uS17 from Brucella suis (strain ATCC 23445 / NCTC 10510).